A 197-amino-acid chain; its full sequence is Protein Hikeshi (197 aa).

The required for F-X-F-G repeats-nucleoporins recognition and nuclear import stretch occupies residues 18–55 (VAEDKFVFDLPDYENINHVVVFMLGTIPFPEGMGGSVY). The flexible linker region involved in nuclear import of HSP70 proteins stretch occupies residues 124–134 (QTPVGSAAVSS).

The protein belongs to the OPI10 family. As to quaternary structure, forms an asymmetric homodimer; required for binding and nuclear import of HSP70 proteins. Interacts with ATP-bound HSP70 proteins. Interacts with NUP62 and NUP153 (via F-X-F-G repeats). Interacts with HSPA8. As to expression, expressed in the central white matter of newborn and adult brain, particularly in regions where oligodendrocytes are generated.

The protein localises to the cytoplasm. The protein resides in the cytosol. It is found in the nucleus. Functionally, acts as a specific nuclear import carrier for HSP70 proteins following heat-shock stress: acts by mediating the nucleoporin-dependent translocation of ATP-bound HSP70 proteins into the nucleus. HSP70 proteins import is required to protect cells from heat shock damages. Does not translocate ADP-bound HSP70 proteins into the nucleus. May also be indirectly required for organization and/or function of the secretory apparatus in Club cells in lung. The sequence is that of Protein Hikeshi from Mus musculus (Mouse).